We begin with the raw amino-acid sequence, 228 residues long: Translation initiation factor 6 (228 aa).

The protein belongs to the eIF-6 family.

In terms of biological role, binds to the 50S ribosomal subunit and prevents its association with the 30S ribosomal subunit to form the 70S initiation complex. This is Translation initiation factor 6 from Thermococcus gammatolerans (strain DSM 15229 / JCM 11827 / EJ3).